A 312-amino-acid chain; its full sequence is UPF0725 protein At3g19520 (312 aa).

Belongs to the UPF0725 (EMB2204) family.

This Arabidopsis thaliana (Mouse-ear cress) protein is UPF0725 protein At3g19520.